We begin with the raw amino-acid sequence, 112 residues long: MKKKTGQLYEGAYVFSVTLSEDARRKALEKVTSGITNYGGEVLKIHDQGRKKLAYTIRGAREGYYYFIYFTVAPEAIAELWREYHLNEDLLRFMTLKASAVKEVLEFATLPE.

It belongs to the bacterial ribosomal protein bS6 family.

Functionally, binds together with bS18 to 16S ribosomal RNA. This is Small ribosomal subunit protein bS6 from Chlamydia trachomatis serovar L2 (strain ATCC VR-902B / DSM 19102 / 434/Bu).